We begin with the raw amino-acid sequence, 663 residues long: Syntabulin (663 aa).

2 disordered regions span residues 1–202 (MGPL…PREK) and 216–267 (VNIH…PEQY). The tract at residues 2–417 (GPLRESKKEH…DTMADGLSLE (416 aa)) is sufficient for interaction with KIF5B. The residue at position 50 (Ser-50) is a Phosphoserine. Positions 57-73 (FNPSSSGRSARTVSSNS) are enriched in low complexity. Over residues 81 to 97 (CPSSQSVSPVKTPSDAG) the composition is skewed to polar residues. Ser-107 carries the post-translational modification Phosphoserine. Low complexity-rich tracts occupy residues 145–158 (EADF…GSIS), 188–198 (SSHKPGSSPSS), and 221–241 (SYAP…SDCS). Residues 271–353 (LQQKEVTVRH…MRSSLADKDK (83 aa)) are a coiled coil. Positions 310 to 417 (REDWIEEECH…DTMADGLSLE (108 aa)) are sufficient for interaction with STX1A. Phosphoserine occurs at positions 396 and 555. A helical transmembrane segment spans residues 606–626 (SFLVDLLAVAAPVVPTVLWAF).

As to quaternary structure, interacts with STX1A and KIF5B. As to expression, isoform 3, isoform 4 and isoform 5 are expressed in HeLa cell line (at protein level). Isoform 3 is expressed in fetal and adult brain. Isoform 4 is expressed in numerous fetal tissues (brain, kidney, liver, lung, and thymus) and in adult brain, kidney, liver, lung, pancreas, colon, prostate, small intestine, testis and thymus. Isoform 5 is expressed in fetal brain, brain and small intestine.

It localises to the cytoplasm. The protein resides in the cytoskeleton. It is found in the cytoplasmic vesicle. Its subcellular location is the golgi apparatus membrane. In terms of biological role, part of a kinesin motor-adapter complex that is critical for the anterograde axonal transport of active zone components and contributes to activity-dependent presynaptic assembly during neuronal development. This is Syntabulin (SYBU) from Homo sapiens (Human).